A 453-amino-acid chain; its full sequence is Protein ECM18 (453 aa).

Residues 130 to 435 (LLIHGYAASS…SGHNLFLDNP (306 aa)) form the AB hydrolase-1 domain. Positions 428–433 (HNLFLD) match the HXXXXD motif motif.

It belongs to the peptidase S33 family. ABHD4/ABHD5 subfamily.

The protein localises to the mitochondrion. Functionally, may be involved in cell wall organization and biogenesis. The sequence is that of Protein ECM18 (ECM18) from Saccharomyces cerevisiae (strain ATCC 204508 / S288c) (Baker's yeast).